We begin with the raw amino-acid sequence, 350 residues long: DNA repair protein rhp55 (350 aa).

51-58 (GAPGMGKT) contributes to the ATP binding site. The interval 331–350 (QSIPTNSSQRRKRSILECES) is disordered.

The protein belongs to the RecA family. RAD55 subfamily.

The protein resides in the nucleus. Required for radiation resistance and meiotic viability and acts in recombination and recombinational DNA repair pathways. The polypeptide is DNA repair protein rhp55 (rhp55) (Schizosaccharomyces pombe (strain 972 / ATCC 24843) (Fission yeast)).